We begin with the raw amino-acid sequence, 527 residues long: Peptide chain release factor 3 (527 aa).

One can recognise a tr-type G domain in the interval 9-277 (AKRRTFAIIS…AVVNWAPKPL (269 aa)). GTP is bound by residues 18–25 (SHPDAGKT), 86–90 (DTPGH), and 140–143 (NKLD).

It belongs to the TRAFAC class translation factor GTPase superfamily. Classic translation factor GTPase family. PrfC subfamily.

Its subcellular location is the cytoplasm. Increases the formation of ribosomal termination complexes and stimulates activities of RF-1 and RF-2. It binds guanine nucleotides and has strong preference for UGA stop codons. It may interact directly with the ribosome. The stimulation of RF-1 and RF-2 is significantly reduced by GTP and GDP, but not by GMP. The protein is Peptide chain release factor 3 of Pseudomonas syringae pv. syringae (strain B728a).